Consider the following 289-residue polypeptide: Ribosomal protein L11 methyltransferase (289 aa).

S-adenosyl-L-methionine contacts are provided by T142, G163, D185, and N226.

This sequence belongs to the methyltransferase superfamily. PrmA family.

Its subcellular location is the cytoplasm. The catalysed reaction is L-lysyl-[protein] + 3 S-adenosyl-L-methionine = N(6),N(6),N(6)-trimethyl-L-lysyl-[protein] + 3 S-adenosyl-L-homocysteine + 3 H(+). Methylates ribosomal protein L11. This Legionella pneumophila subsp. pneumophila (strain Philadelphia 1 / ATCC 33152 / DSM 7513) protein is Ribosomal protein L11 methyltransferase.